We begin with the raw amino-acid sequence, 389 residues long: Protein WALLS ARE THIN 1 (389 aa).

Helical transmembrane passes span 18 to 38, 49 to 69, 76 to 96, 111 to 131, 143 to 163, 198 to 218, 230 to 250, 266 to 286, 294 to 314, and 319 to 339; these read LQLH…HVVS, LVFP…FAYF, PAIT…GITA, TFAS…AALL, GISK…ITLY, WTLG…WLVF, LSVT…IAAF, LFTI…VQIW, VFVA…ASIA, and FYLG…FVLY. EamA domains follow at residues 32–161 and 210–339; these read AGFH…SVIT and LSWS…FVLY. Serine 372 carries the phosphoserine modification.

Belongs to the drug/metabolite transporter (DMT) superfamily. Plant drug/metabolite exporter (P-DME) (TC 2.A.7.4) family. Mostly expressed in stems and hypocotyls, also present in seedlings, root, leaves, flowers and siliques. Ubiquitous, mostly expressed in vascular tissues and secondary wall-forming cells, including developing xylem vessels and fibers.

Its subcellular location is the vacuole membrane. Required for secondary wall formation in fibers, especially in short days conditions. Promotes indole metabolism and transport (e.g. tryptophan, neoglucobrassicin and auxin (indole-3-acetic acid)). May prevent salicylic-acid (SA) accumulation. The chain is Protein WALLS ARE THIN 1 (WAT1) from Arabidopsis thaliana (Mouse-ear cress).